The chain runs to 107 residues: uncharacterized protein (107 aa).

Polar residues predominate over residues 80-98; that stretch reads SIDNLKPTSHQNGTTNDTA. The segment at 80 to 107 is disordered; it reads SIDNLKPTSHQNGTTNDTATMDHLEKNE.

This is an uncharacterized protein from Human spumaretrovirus (SFVcpz(hu)).